A 160-amino-acid polypeptide reads, in one-letter code: MEYNLHDTTVLNENILSSEEREIWVLYMKVLTSAGLGDVSEWMKLDMSMPQMKVLMLLNNHGTLKVSDIAEKMGASLSNTTGLLDRLEKSGFVKRSHSEEDRRSVVVQLTENAKKIFRGLYEKGHLKLKRSLELLSPEEKQAVYEGLSILSRALENAKKE.

Positions E20–R152 constitute an HTH marR-type domain. The H-T-H motif DNA-binding region spans V66 to K89.

This is an uncharacterized protein from Bacillus subtilis (strain 168).